A 132-amino-acid polypeptide reads, in one-letter code: Transmembrane protein C1orf162 homolog (132 aa).

Residues 36–56 traverse the membrane as a helical segment; the sequence is IILAFFAGVLLTLLIVALIFL. The segment at 95–132 is disordered; sequence TFKPPEENSNDLTRNHSSGLEPTIYSQIKVTDSDLPLP. Residues 104–124 are compositionally biased toward polar residues; it reads NDLTRNHSSGLEPTIYSQIKV. Position 111 is a phosphoserine (serine 111).

The protein resides in the membrane. This is Transmembrane protein C1orf162 homolog from Mus musculus (Mouse).